The chain runs to 564 residues: Beta-N-acetylglucosaminidase/beta-glucosidase (564 aa).

Asp-283 serves as the catalytic Nucleophile.

Belongs to the glycosyl hydrolase 3 family.

It carries out the reaction Hydrolysis of terminal non-reducing N-acetyl-D-hexosamine residues in N-acetyl-beta-D-hexosaminides.. It catalyses the reaction Hydrolysis of terminal, non-reducing beta-D-glucosyl residues with release of beta-D-glucose.. Catalyzes the cleavage of beta-N-acetyl-D-glucosaminides and beta-D-glucosides. Might be involved in the degradation of glucuronic acid-containing glycosaminoglycans such as hyaluronic acid. This chain is Beta-N-acetylglucosaminidase/beta-glucosidase (nag3), found in Cellulomonas fimi.